A 221-amino-acid chain; its full sequence is Putative hemin import ATP-binding protein HrtA (221 aa).

The 219-residue stretch at 3 to 221 (LVVEDIVKNF…IELEDGKITD (219 aa)) folds into the ABC transporter domain. ATP is bound at residue 39-46 (GASGSGKT).

It belongs to the ABC transporter superfamily. HrtA family. In terms of assembly, the complex is composed of two ATP-binding proteins (HrtA), two transmembrane proteins (HrtB) and a solute-binding protein.

It is found in the cell membrane. Functionally, part of the ABC transporter complex hrt involved in hemin import. Responsible for energy coupling to the transport system. The sequence is that of Putative hemin import ATP-binding protein HrtA (hrtA) from Staphylococcus aureus (strain bovine RF122 / ET3-1).